A 354-amino-acid chain; its full sequence is Homer protein homolog 2 (354 aa).

The region spanning Met-1 to Ala-110 is the WH1 domain. Residues Ser-92–Lys-120 are a coiled coil. The segment at Arg-114 to Lys-163 is disordered. Over residues Thr-123–Gly-146 the composition is skewed to polar residues. Residues Thr-160–Phe-329 adopt a coiled-coil conformation.

Belongs to the Homer family. In terms of assembly, isoform 1 and isoform 2 encode coiled-coil structures that mediate homo- and heteromultimerization. Interacts with NFATC2; interaction is reduced by AKT activation. Interacts with NFATC1 and NFATC4. Interacts with DAGLA (via PPXXF motif); this interaction is required for the cell membrane localization of DAGLA. Constitutively expressed in the adult hippocampus.

The protein resides in the cytoplasm. Its subcellular location is the cell membrane. It is found in the postsynaptic density. It localises to the synapse. The protein localises to the cell projection. The protein resides in the stereocilium. Postsynaptic density scaffolding protein. Binds and cross-links cytoplasmic regions of GRM1, GRM5, ITPR1, DNM3, RYR1, RYR2, SHANK1 and SHANK3. By physically linking GRM1 and GRM5 with ER-associated ITPR1 receptors, it aids the coupling of surface receptors to intracellular calcium release. May also couple GRM1 to PI3 kinase through its interaction with AGAP2. Isoforms can be differently regulated and may play an important role in maintaining the plasticity at glutamatergic synapses. Required for normal hearing. Negatively regulates T cell activation by inhibiting the calcineurin-NFAT pathway. Acts by competing with calcineurin/PPP3CA for NFAT protein binding, hence preventing NFAT activation by PPP3CA. The polypeptide is Homer protein homolog 2 (Rattus norvegicus (Rat)).